The sequence spans 531 residues: UDP-glucuronosyltransferase 1A5 (531 aa).

The N-terminal stretch at 1–25 (MGLHVTLQGLAGLLLLLYALPWAEG) is a signal peptide. 5 N-linked (GlcNAc...) asparagine glycosylation sites follow: asparagine 116, asparagine 131, asparagine 139, asparagine 293, and asparagine 431. Residues 489-505 (VIGFLLAIVLTVVFIVY) form a helical membrane-spanning segment.

The protein belongs to the UDP-glycosyltransferase family. As to quaternary structure, homodimer. Homooligomer. Interacts with UGT1A1, UGT1A3, UGT1A4, UGT1A6, UGT1A7, UGT1A8, UGT1A9 and UGT1A10 to form heterodimers.

It is found in the endoplasmic reticulum membrane. It catalyses the reaction glucuronate acceptor + UDP-alpha-D-glucuronate = acceptor beta-D-glucuronoside + UDP + H(+). The enzyme catalyses zolasartan + UDP-alpha-D-glucuronate = zolarsartan-1-N-beta-D-glucuronide + UDP. Its function is as follows. UDP-glucuronosyltransferase (UGT) that catalyzes phase II biotransformation reactions in which lipophilic substrates are conjugated with glucuronic acid to increase the metabolite's water solubility, thereby facilitating excretion into either the urine or bile. Essential for the elimination and detoxification of drugs, xenobiotics and endogenous compounds. Involved in the glucuronidation of the AGTR1 angiotensin receptor antagonist zolarsatan, a drug which can inhibit the effect of angiotensin II. This chain is UDP-glucuronosyltransferase 1A5, found in Rattus norvegicus (Rat).